Consider the following 369-residue polypeptide: Delta(14)-sterol reductase (369 aa).

7 helical membrane passes run 15-34 (QSVY…GEIL), 54-76 (CNGL…LGIV), 86-105 (LELL…ALYV), 146-168 (FFFV…AKSV), 178-195 (ILYQ…FVHE), 208-230 (RLGF…IQGW), and 240-262 (TVPA…RGAN). Residues Lys-265, Lys-269, Leu-289, Trp-294, and 301–302 (NY) each bind NADP(+). The chain crosses the membrane as a helical span at residues 275–297 (PIWGKPPVVVGGKLLVSGYWGIA). The helical transmembrane segment at 317 to 336 (GISSPVPYFYPIYLLILLIW) threads the bilayer. NADP(+) contacts are provided by residues Asp-341, 345–349 (CAEKY), and Tyr-356.

This sequence belongs to the ERG4/ERG24 family.

It localises to the membrane. It carries out the reaction 4,4-dimethyl-5alpha-cholesta-8,24-dien-3beta-ol + NADP(+) = 4,4-dimethyl-5alpha-cholesta-8,14,24-trien-3beta-ol + NADPH + H(+). Its pathway is steroid biosynthesis; zymosterol biosynthesis; zymosterol from lanosterol: step 2/6. Reduces the C14=C15 double bond of 4,4-dimethyl-cholesta-8,14,24-trienol to produce 4,4-dimethyl-cholesta-8,24-dienol. Required for cell division and expansion and is involved in proper organization of the embryo. The sequence is that of Delta(14)-sterol reductase (FK) from Arabidopsis thaliana (Mouse-ear cress).